The chain runs to 337 residues: Transmembrane protein 120B (337 aa).

Residues 1–39 (MSLERCQSEWTEIEQEYQQLQETHKVYRQKLEELTNLQA) adopt a coiled-coil conformation. Transmembrane regions (helical) follow at residues 100-122 (GLYL…AKFA), 130-150 (FKLY…FLLN), 157-175 (IFNF…RESI), 185-205 (GWWV…LTWP), 268-288 (FLLP…VTLF), and 300-320 (QVFM…LTTL).

Belongs to the TMEM120 family.

The protein resides in the nucleus inner membrane. Necessary for efficient adipogenesis. Does not show ion channel activity. The protein is Transmembrane protein 120B (tmem120b) of Danio rerio (Zebrafish).